The following is a 516-amino-acid chain: Delta(24)-sterol reductase (516 aa).

The N-terminal stretch at 1–22 (MEPAVSLAVCALLFLLWVRVKG) is a signal peptide. The Lumenal segment spans residues 23–31 (LEFVLIHQR). A helical transmembrane segment spans residues 32-52 (WVFVCLFLLPLSLIFDIYYYV). Over 53-516 (RAWVVFKLSS…YDKICKAARH (464 aa)) the chain is Cytoplasmic. Residues 58–234 (FKLSSAPRLH…VAAEIRIIPA (177 aa)) enclose the FAD-binding PCMH-type domain. 163–175 (TVGGLIMGTGIES) is a binding site for FAD.

Belongs to the FAD-binding oxidoreductase/transferase type 4 family. FAD serves as cofactor.

The protein localises to the endoplasmic reticulum membrane. It is found in the golgi apparatus membrane. The catalysed reaction is 5alpha-cholest-8-en-3beta-ol + NADP(+) = zymosterol + NADPH + H(+). It catalyses the reaction cholesterol + NADP(+) = desmosterol + NADPH + H(+). The enzyme catalyses lanosterol + NADPH + H(+) = 24,25-dihydrolanosterol + NADP(+). It participates in steroid biosynthesis; cholesterol biosynthesis. Catalyzes the reduction of the delta-24 double bond of sterol intermediates during cholesterol biosynthesis. In addition to its cholesterol-synthesizing activity, can protect cells from oxidative stress by reducing caspase 3 activity during apoptosis induced by oxidative stress. Also protects against amyloid-beta peptide-induced apoptosis. This Mus musculus (Mouse) protein is Delta(24)-sterol reductase (Dhcr24).